The sequence spans 36 residues: IACAPRFSICNSDKECCKGLRCQSRIANMWPTFCLV.

Cystine bridges form between C3-C17, C10-C22, and C16-C34.

Expressed by the venom gland.

The protein resides in the secreted. Functionally, neurotoxin. Causes spastic paralysis and death in mice. Moderate inhibitor of L-type calcium channels (Cav1/CACNA1). In Phoneutria nigriventer (Brazilian armed spider), this protein is Neurotoxin PRTx26An0C3.